Consider the following 415-residue polypeptide: Cyclin-A2 (415 aa).

This sequence belongs to the cyclin family. Cyclin AB subfamily. Interacts with the CDK1 and CDK2 protein kinases to form serine/threonine kinase holoenzyme complexes. As to expression, ubiquitous.

The protein localises to the nucleus. Its subcellular location is the cytoplasm. Cyclin which controls both the G1/S and the G2/M transition phases of the cell cycle. Functions through the formation of specific serine/threonine kinase holoenzyme complexes with the cyclin-dependent protein kinases CDK1 and CDK2. The cyclin subunit confers the substrate specificity of these complexes and differentially interacts with and activates CDK1 and CDK2 throughout the cell cycle. This Xenopus laevis (African clawed frog) protein is Cyclin-A2 (ccna2).